The following is a 193-amino-acid chain: MNPLNPSSDGIKENLLTLLAQKAYRFGDFSLASGKKSSHYVNCKPVSLSGPGLLSISSLFLKQINESDSGVAGLTLGADPLVSGVVILAAQSGIDLNGLIVRKEAKGHGTGAWLEGPLPPKGSVITVLEDVVTTGGSSLKAVEQLRNQGYLVKQVLAIVDREEGGLDAISKADLELNSLFFLKEIVERANSLQ.

Residues Arg102, Lys103, Lys106, His108, and 129–137 (EDVVTTGGS) contribute to the 5-phospho-alpha-D-ribose 1-diphosphate site. Orotate contacts are provided by Thr133 and Arg161.

It belongs to the purine/pyrimidine phosphoribosyltransferase family. PyrE subfamily. Homodimer. Requires Mg(2+) as cofactor.

The enzyme catalyses orotidine 5'-phosphate + diphosphate = orotate + 5-phospho-alpha-D-ribose 1-diphosphate. Its pathway is pyrimidine metabolism; UMP biosynthesis via de novo pathway; UMP from orotate: step 1/2. Functionally, catalyzes the transfer of a ribosyl phosphate group from 5-phosphoribose 1-diphosphate to orotate, leading to the formation of orotidine monophosphate (OMP). In Prochlorococcus marinus (strain NATL1A), this protein is Orotate phosphoribosyltransferase.